A 236-amino-acid polypeptide reads, in one-letter code: Class B acid phosphatase (236 aa).

Residues 1-22 (MKNVMKLSVIALLTAAAVPAMA) form the signal peptide. Aspartate 67 acts as the Nucleophile in catalysis. Aspartate 67 and aspartate 69 together coordinate Mg(2+). Aspartate 69 acts as the Proton donor in catalysis. Residues 136-137 (TG) and lysine 176 each bind substrate. Mg(2+) is bound at residue aspartate 191.

The protein belongs to the class B bacterial acid phosphatase family. In terms of assembly, homotetramer. Mg(2+) is required as a cofactor.

Its subcellular location is the periplasm. The catalysed reaction is a phosphate monoester + H2O = an alcohol + phosphate. Its function is as follows. Dephosphorylates several organic phosphate monoesters. Also has a phosphotransferase activity catalyzing the transfer of low-energy phosphate groups from organic phosphate monoesters to free hydroxyl groups of various organic compounds. This chain is Class B acid phosphatase (aphA), found in Haemophilus influenzae (strain ATCC 51907 / DSM 11121 / KW20 / Rd).